We begin with the raw amino-acid sequence, 112 residues long: Large ribosomal subunit protein bL20c (112 aa).

It belongs to the bacterial ribosomal protein bL20 family.

The protein localises to the plastid. It is found in the chloroplast. Functionally, binds directly to 23S ribosomal RNA and is necessary for the in vitro assembly process of the 50S ribosomal subunit. It is not involved in the protein synthesizing functions of that subunit. The sequence is that of Large ribosomal subunit protein bL20c (rpl20) from Anthoceros angustus (Hornwort).